The primary structure comprises 429 residues: MAKIVDIKGREVLDSRGNPTVEADVILDNGIVGSACAPSGASTGSREALELRDGDKSRYLGKGVLKAVANINGPIRDLLLGKDAADQKALDHAMIELDGTENKAKLGANAILAVSLAAAKAAAQAKGVPLYAHIADLNGTPGQYSMPVPMMNIINGGEHADNNVDIQEFMVQPVGAKNFAEALRMGAEIFHHLKAVLKARGLNTAVGDEGGFAPNLSSNEDALAAIAEAVEKAGYKLGDDVTLALDCASSEFFKDGKYDLEGEGKVFDAAGFADYLAGLTQRYPIISIEDGMDESDWAGWKGLTDKIGAKVQLVGDDLFVTNTKILKEGIEKGIGNSILIKFNQIGSLTETLEAIQMAKAAGYTAVISHRSGETEDSTIADLAVGTAAGQIKTGSLCRSDRVSKYNQLLRIEEQLGAKAPYRGRAEFRG.

(2R)-2-phosphoglycerate is bound at residue Gln-167. Glu-209 acts as the Proton donor in catalysis. Mg(2+)-binding residues include Asp-246, Glu-289, and Asp-316. (2R)-2-phosphoglycerate contacts are provided by Lys-341, Arg-370, Ser-371, and Lys-392. Lys-341 (proton acceptor) is an active-site residue.

The protein belongs to the enolase family. As to quaternary structure, component of the RNA degradosome, a multiprotein complex involved in RNA processing and mRNA degradation. Mg(2+) serves as cofactor.

The protein resides in the cytoplasm. It is found in the secreted. It localises to the cell surface. It carries out the reaction (2R)-2-phosphoglycerate = phosphoenolpyruvate + H2O. It functions in the pathway carbohydrate degradation; glycolysis; pyruvate from D-glyceraldehyde 3-phosphate: step 4/5. In terms of biological role, catalyzes the reversible conversion of 2-phosphoglycerate (2-PG) into phosphoenolpyruvate (PEP). It is essential for the degradation of carbohydrates via glycolysis. In Pseudomonas aeruginosa (strain LESB58), this protein is Enolase.